The primary structure comprises 469 residues: NADH-quinone oxidoreductase subunit N (469 aa).

14 consecutive transmembrane segments (helical) span residues 2-22 (IALL…FLCV), 28-48 (RYSI…FFIV), 70-90 (FSFC…ISSF), 101-121 (EMFA…LSVE), 122-142 (LILT…MIAM), 157-177 (FLLS…VFGV), 194-214 (FLSI…IAIF), 233-253 (GFLA…LCFL), 261-281 (ILQG…NLLS), 290-310 (ILIA…SSVG), 315-335 (IYPA…LFAI), 361-381 (AFAF…VGFL), 398-418 (LAIF…KIII), and 447-467 (ILFI…LNLF).

Belongs to the complex I subunit 2 family. As to quaternary structure, NDH-1 is composed of 14 different subunits. Subunits NuoA, H, J, K, L, M, N constitute the membrane sector of the complex.

It is found in the cell inner membrane. It catalyses the reaction a quinone + NADH + 5 H(+)(in) = a quinol + NAD(+) + 4 H(+)(out). Its function is as follows. NDH-1 shuttles electrons from NADH, via FMN and iron-sulfur (Fe-S) centers, to quinones in the respiratory chain. The immediate electron acceptor for the enzyme in this species is believed to be ubiquinone. Couples the redox reaction to proton translocation (for every two electrons transferred, four hydrogen ions are translocated across the cytoplasmic membrane), and thus conserves the redox energy in a proton gradient. The protein is NADH-quinone oxidoreductase subunit N of Campylobacter fetus subsp. fetus (strain 82-40).